The sequence spans 364 residues: Adenosine 3'-phospho 5'-phosphosulfate transporter 2 (364 aa).

10 helical membrane passes run 39–59, 74–94, 106–126, 131–151, 157–177, 187–206, 231–251, 257–277, 281–301, and 310–330; these read WLQFVLLSLAIFILYIGYGYM, WTLTLIQFLIYSGCGYTECII, IYGVIAFFTVATMGLSNASVG, PTQVIFKCCKLIPVLIGGILI, GWIDIGAAMLMSLGIIMFTLA, SRGYIMICGALLADAVIGNI, VFIFAFVVLSGEVFSAIPFFL, TFGYALILSCLGYLGVNVVLT, VFGALVAVTVTTLRKALTIIL, and FTIEYVYAGSVVMLAIYLNLY.

Belongs to the nucleotide-sugar transporter family. SLC35B subfamily.

The protein localises to the golgi apparatus membrane. In terms of biological role, mediates the transport of adenosine 3'-phospho 5'-phosphosulfate (PAPS), from cytosol into Golgi. PAPS is a universal sulfuryl donor for sulfation events that take place in the Golgi. The protein is Adenosine 3'-phospho 5'-phosphosulfate transporter 2 (pst-2) of Caenorhabditis elegans.